We begin with the raw amino-acid sequence, 2670 residues long: Inositol 1,4,5-trisphosphate-gated calcium channel ITPR3 (2670 aa).

Residues 1 to 2201 (MNEMSSFLHI…LIYWFSRRMT (2201 aa)) lie on the Cytoplasmic side of the membrane. MIR domains lie at 113–173 (GDVV…LRSN), 174–224 (GDNV…INLF), 232–288 (EEVL…VEVV), 295–372 (GGAG…LDPT), and 378–434 (DSFV…IVSV). Residues R266, T268, L269, and R270 each contribute to the 1D-myo-inositol 1,4,5-trisphosphate site. Residues 321-344 (PSYKGDVSDPKAAGPGAQSRTGRR) form a disordered region. 1D-myo-inositol 1,4,5-trisphosphate-binding residues include R503, K507, R510, Y567, R568, and K569. R743 is a binding site for Ca(2+). Residues S916 and S934 each carry the phosphoserine modification. Ca(2+) is bound by residues E1122 and E1125. The span at 1134–1153 (VKGEEGEAGASKDKKERPSD) shows a compositional bias: basic and acidic residues. Disordered regions lie at residues 1134-1164 (VKGE…HGEK) and 1807-1849 (NMSD…GLHR). A phosphoserine mark is found at S1813, S1832, and S1834. Low complexity predominate over residues 1831–1842 (SSFSMPSSSRYS). Residues E1881 and E1945 each coordinate Ca(2+). ATP-binding residues include A1995, E2148, and K2151. Residues 2202–2222 (LWGSISFNLAVFINIIIAFFY) traverse the membrane as a helical segment. The Extracellular segment spans residues 2223-2233 (PYVEGASTGVL). A helical membrane pass occupies residues 2234-2254 (GSPLISLLFWILICFSIAALF). Over 2255 to 2263 (TKHYSVRPL) the chain is Cytoplasmic. A helical transmembrane segment spans residues 2264–2284 (IVALVLRSIYYLGIGPTLNIL). The Extracellular segment spans residues 2285–2324 (GALNLTNKIVFVVSFVGNRGTFIRGYKAMVMDMEFLYHVG). A helical membrane pass occupies residues 2325 to 2345 (YILTSVLGLFAHELFYSILLF). The Cytoplasmic portion of the chain corresponds to 2346-2367 (DLIYREETLFNVIKSVTRNGRS). A helical transmembrane segment spans residues 2368–2388 (ILLTALLALILVYLFSIVGFL). The Extracellular segment spans residues 2389–2495 (FLKDDFILEV…ESLFPARVVY (107 aa)). C2454 and C2460 are oxidised to a cystine. A helical membrane pass occupies residues 2496–2516 (DLLFFFIVIIIVLNLIFGVII). Residues 2517–2670 (DTFADLRSEK…FVDVQNCMSR (154 aa)) are Cytoplasmic-facing. C2537 and F2538 together coordinate ATP. C2537 contacts Zn(2+). The Zn(2+) site is built by C2540 and H2557. ATP contacts are provided by K2559, H2562, N2563, and M2564. Position 2562 (H2562) interacts with Zn(2+). T2580 contacts Ca(2+). Phosphoserine is present on residues S2608 and S2669.

The protein belongs to the InsP3 receptor family. As to quaternary structure, homotetramer. Homodimer. Interacts with TRPC1 and TRPC3. Interacts with TRPC4. Interacts with TRPV4. Interacts with SIGMAR1. Interacts with AKT1 and PML. Interacts with IRAG2 (via coiled-coil domain). Interacts with CABP1. Interacts with TMBIM4/LFG4. Interacts with CEMIP. Interacts with TESPA1. Interacts with TMEM203. Interacts with BOK; regulates ITPR3 expression. Interacts with BCL2L10. Interacts with CHGA and CHGB. Post-translationally, phosphorylated by AKT1 on serine and/or threonine residues.

The protein localises to the endoplasmic reticulum membrane. The protein resides in the cytoplasmic vesicle. It is found in the secretory vesicle membrane. It carries out the reaction Ca(2+)(in) = Ca(2+)(out). With respect to regulation, inositol 1,4,5-trisphosphate-gated calcium channel is regulated by cytosolic calcium in a biphasic manner. At low concentrations, cytosolic calcium binds at a high-affinity juxtamembrane domain (JD) calcium binding site, allowing ITPR3 to activate by escaping a low-energy resting state through an ensemble of preactivated states. At high cytosolic calcium concentrations, ITPR3 preferentially enters an inhibited state stabilized by calcium binding at a second, low-affinity cytoplasmic domain (CD) calcium binding site. In terms of biological role, inositol 1,4,5-trisphosphate-gated calcium channel that, upon 1D-myo-inositol 1,4,5-trisphosphate binding, transports calcium from the endoplasmic reticulum lumen to cytoplasm, thus releasing the intracellular calcium and therefore participates in cellular calcium ion homeostasis. 11D-myo-inositol 1,4,5-trisphosphate binds to the ligand-free channel without altering its global conformation, yielding the low-energy resting state, then progresses through resting-to preactivated transitions to the higher energy preactivated state, which increases affinity for calcium, promoting binding of the low basal cytosolic calcium at the juxtamembrane domain (JD) site, favoring the transition through the ensemble of high-energy intermediate states along the trajectory to the fully-open activated state. Upon opening, releases calcium in the cytosol where it can bind to the low-affinity cytoplasmic domain (CD) site and stabilizes the inhibited state to terminate calcium release. The sequence is that of Inositol 1,4,5-trisphosphate-gated calcium channel ITPR3 from Rattus norvegicus (Rat).